Here is a 470-residue protein sequence, read N- to C-terminus: Diaminobutyrate--2-oxoglutarate aminotransferase (470 aa).

The residue at position 304 (K304) is an N6-(pyridoxal phosphate)lysine.

Belongs to the class-III pyridoxal-phosphate-dependent aminotransferase family. The cofactor is pyridoxal 5'-phosphate.

It carries out the reaction L-2,4-diaminobutanoate + 2-oxoglutarate = L-aspartate 4-semialdehyde + L-glutamate. It functions in the pathway siderophore biosynthesis; rhizobactin biosynthesis. The polypeptide is Diaminobutyrate--2-oxoglutarate aminotransferase (rhbA) (Rhizobium meliloti (strain 1021) (Ensifer meliloti)).